The primary structure comprises 517 residues: Aldehyde dehydrogenase X, mitochondrial (517 aa).

The N-terminal 17 residues, 1-17, are a transit peptide targeting the mitochondrion; the sequence is MLRFLAPRLLSLQGRTA. Residue Lys51 is modified to N6-acetyllysine. Position 52 is an N6-acetyllysine; alternate (Lys52). Lys52 bears the N6-succinyllysine; alternate mark. The residue at position 81 (Lys81) is an N6-succinyllysine. 262–267 contacts NAD(+); the sequence is GSTEVG. The active-site Proton acceptor is the Glu285. Residue Cys319 is the Nucleophile of the active site. An N6-acetyllysine; alternate mark is found at Lys364, Lys383, Lys399, Lys414, and Lys426. N6-succinyllysine; alternate occurs at positions 364, 383, 399, 414, and 426. Lys429 is subject to N6-acetyllysine.

The protein belongs to the aldehyde dehydrogenase family. Homotetramer.

Its subcellular location is the mitochondrion matrix. It catalyses the reaction an aldehyde + NAD(+) + H2O = a carboxylate + NADH + 2 H(+). The protein operates within alcohol metabolism; ethanol degradation; acetate from ethanol: step 2/2. ALDHs play a major role in the detoxification of alcohol-derived acetaldehyde. They are involved in the metabolism of corticosteroids, biogenic amines, neurotransmitters, and lipid peroxidation. The chain is Aldehyde dehydrogenase X, mitochondrial (ALDH1B1) from Pongo abelii (Sumatran orangutan).